We begin with the raw amino-acid sequence, 439 residues long: MSIDINWEAATSGPDGEALAERIRSFIHDKFQQIALPRFIRSVEVNSFDFGTVRPQLQIKDLCDPFEDFYEEDEGDEDFSDDQDGAPKHPPTIATERSGAGTWQAEHPSFVAGRLPGGIESRDIPAPSKEDLLASRPMRSPMSFGESLNPYFFPRAGTPGIPGGTSNLGYYMPLGGMSGTQTPLASVPRGPFSPGLRDSSVYGDIHNPPARDYPRPVHRQTDTDIDSGHSRPSTADTLNSINSQRISNPALSHPHSSNESHPDTRDHSPPPRRMHEKKPDDLQVLCQLRYNGNIRLSLTAQVLLDYPMPSFVGLPLKLNITGLSFDGVAVVAYIRKRVHFCFLSPEDADTLLGSEESNETGYIPGINPIGGGASGGAASSRRRDDSLLRDVRVESEIGRKEDGKPVLKNVGKVEKFVLEQVRRIFEEEFVYPSFWTFLV.

The SMP-LTD domain maps to 1–439 (MSIDINWEAA…VYPSFWTFLV (439 aa)). Residues 71–84 (EEDEGDEDFSDDQD) are compositionally biased toward acidic residues. 3 disordered regions span residues 71-104 (EEDE…GTWQ), 182-278 (TPLA…HEKK), and 362-385 (YIPG…RRDD). Positions 212–229 (DYPRPVHRQTDTDIDSGH) are enriched in basic and acidic residues. Over residues 230–255 (SRPSTADTLNSINSQRISNPALSHPH) the composition is skewed to polar residues. Over residues 256-269 (SSNESHPDTRDHSP) the composition is skewed to basic and acidic residues.

This sequence belongs to the MDM12 family. Component of the ER-mitochondria encounter structure (ERMES) or MDM complex, composed of MMM1, MDM10, MDM12 and MDM34. An MMM1 homodimer associates with one molecule of MDM12 on each side in a pairwise head-to-tail manner, and the SMP-LTD domains of MMM1 and MDM12 generate a continuous hydrophobic tunnel for phospholipid trafficking.

Its subcellular location is the mitochondrion outer membrane. The protein resides in the endoplasmic reticulum membrane. Functionally, component of the ERMES/MDM complex, which serves as a molecular tether to connect the endoplasmic reticulum (ER) and mitochondria. Components of this complex are involved in the control of mitochondrial shape and protein biogenesis, and function in nonvesicular lipid trafficking between the ER and mitochondria. MDM12 is required for the interaction of the ER-resident membrane protein MMM1 and the outer mitochondrial membrane-resident beta-barrel protein MDM10. The MDM12-MMM1 subcomplex functions in the major beta-barrel assembly pathway that is responsible for biogenesis of all mitochondrial outer membrane beta-barrel proteins, and acts in a late step after the SAM complex. The MDM10-MDM12-MMM1 subcomplex further acts in the TOM40-specific pathway after the action of the MDM12-MMM1 complex. Essential for establishing and maintaining the structure of mitochondria and maintenance of mtDNA nucleoids. The chain is Mitochondrial distribution and morphology protein 12 from Uncinocarpus reesii (strain UAMH 1704).